The primary structure comprises 455 residues: Bifunctional protein GlmU (455 aa).

The tract at residues 1-230 is pyrophosphorylase; the sequence is MVNKNAIILA…FDESMGVNDR (230 aa). UDP-N-acetyl-alpha-D-glucosamine is bound by residues 9–12, Lys-23, Gln-73, 78–79, 101–103, Gly-140, Glu-155, Asn-170, and Asn-228; these read LAAG, GT, and SGD. Asp-103 serves as a coordination point for Mg(2+). Position 228 (Asn-228) interacts with Mg(2+). The segment at 231-251 is linker; sequence SALAKATKIMQKRINTQLMKD. The tract at residues 252–455 is N-acetyltransferase; the sequence is GVTLVDPETA…KPGYAKKLPW (204 aa). UDP-N-acetyl-alpha-D-glucosamine contacts are provided by Arg-333 and Lys-351. The active-site Proton acceptor is His-363. UDP-N-acetyl-alpha-D-glucosamine is bound by residues Tyr-366 and Asn-377. Acetyl-CoA-binding positions include 386 to 387, Ser-405, Ala-423, and Arg-440; that span reads NY.

In the N-terminal section; belongs to the N-acetylglucosamine-1-phosphate uridyltransferase family. This sequence in the C-terminal section; belongs to the transferase hexapeptide repeat family. As to quaternary structure, homotrimer. Mg(2+) is required as a cofactor.

Its subcellular location is the cytoplasm. The enzyme catalyses alpha-D-glucosamine 1-phosphate + acetyl-CoA = N-acetyl-alpha-D-glucosamine 1-phosphate + CoA + H(+). It carries out the reaction N-acetyl-alpha-D-glucosamine 1-phosphate + UTP + H(+) = UDP-N-acetyl-alpha-D-glucosamine + diphosphate. It functions in the pathway nucleotide-sugar biosynthesis; UDP-N-acetyl-alpha-D-glucosamine biosynthesis; N-acetyl-alpha-D-glucosamine 1-phosphate from alpha-D-glucosamine 6-phosphate (route II): step 2/2. The protein operates within nucleotide-sugar biosynthesis; UDP-N-acetyl-alpha-D-glucosamine biosynthesis; UDP-N-acetyl-alpha-D-glucosamine from N-acetyl-alpha-D-glucosamine 1-phosphate: step 1/1. It participates in bacterial outer membrane biogenesis; LPS lipid A biosynthesis. Its function is as follows. Catalyzes the last two sequential reactions in the de novo biosynthetic pathway for UDP-N-acetylglucosamine (UDP-GlcNAc). The C-terminal domain catalyzes the transfer of acetyl group from acetyl coenzyme A to glucosamine-1-phosphate (GlcN-1-P) to produce N-acetylglucosamine-1-phosphate (GlcNAc-1-P), which is converted into UDP-GlcNAc by the transfer of uridine 5-monophosphate (from uridine 5-triphosphate), a reaction catalyzed by the N-terminal domain. This chain is Bifunctional protein GlmU, found in Limosilactobacillus fermentum (strain NBRC 3956 / LMG 18251) (Lactobacillus fermentum).